A 261-amino-acid chain; its full sequence is Small ribosomal subunit protein eS4 (261 aa).

Residues 42-100 form the S4 RNA-binding domain; that stretch reads LPLILILRNRLKYALTYREVVSILMQRHILVDGKIHFCIRLSDVVSIPKTNENFRLLYD.

Belongs to the eukaryotic ribosomal protein eS4 family.

The protein resides in the cytoplasm. This is Small ribosomal subunit protein eS4 (RPS4) from Prunus armeniaca (Apricot).